Consider the following 152-residue polypeptide: Deoxyuridine 5'-triphosphate nucleotidohydrolase (152 aa).

Residues 71–73 (RSG), N84, 88–90 (LID), and M98 each bind substrate.

The protein belongs to the dUTPase family. Mg(2+) is required as a cofactor.

It carries out the reaction dUTP + H2O = dUMP + diphosphate + H(+). Its pathway is pyrimidine metabolism; dUMP biosynthesis; dUMP from dCTP (dUTP route): step 2/2. This enzyme is involved in nucleotide metabolism: it produces dUMP, the immediate precursor of thymidine nucleotides and it decreases the intracellular concentration of dUTP so that uracil cannot be incorporated into DNA. The chain is Deoxyuridine 5'-triphosphate nucleotidohydrolase from Coxiella burnetii (strain Dugway 5J108-111).